The sequence spans 627 residues: Glutamine--fructose-6-phosphate aminotransferase [isomerizing] (627 aa).

Cysteine 2 functions as the Nucleophile; for GATase activity in the catalytic mechanism. Positions 2–224 constitute a Glutamine amidotransferase type-2 domain; sequence CGIVGYIGTQ…NGEIARLTPL (223 aa). 2 consecutive SIS domains span residues 293–442 and 476–617; these read LPEN…HRQT and LAHE…VDQP. Lysine 622 serves as the catalytic For Fru-6P isomerization activity.

Homodimer.

It localises to the cytoplasm. The enzyme catalyses D-fructose 6-phosphate + L-glutamine = D-glucosamine 6-phosphate + L-glutamate. Functionally, catalyzes the first step in hexosamine metabolism, converting fructose-6P into glucosamine-6P using glutamine as a nitrogen source. This is Glutamine--fructose-6-phosphate aminotransferase [isomerizing] from Nostoc sp. (strain PCC 9229).